Reading from the N-terminus, the 699-residue chain is Extracellular matrix protein 2 (699 aa).

Positions 1–20 are cleaved as a signal peptide; that stretch reads MKIAVLFCFFLLIIFQTDFG. The VWFC domain occupies 101 to 158; it reads GHCLVKGITMYNKAVWSPEPCTTCLCSDGRVLCDETMCHPQRCPQTVIPEGECCPVCS. Basic and acidic residues predominate over residues 176-186; the sequence is EFSGDSSEQRE. Positions 176–316 are disordered; it reads EFSGDSSEQR…PAPPRGTLRL (141 aa). Residues 212–224 are compositionally biased toward acidic residues; that stretch reads QSEEDEEVKEEDT. The segment covering 243–260 has biased composition (basic and acidic residues); it reads GDSRGGDRKQRPGEERRL. A compositionally biased stretch (acidic residues) spans 270–291; the sequence is EEEEDEEEEGEEGEEDEEDEED. A Cell attachment site motif is present at residues 294-296; that stretch reads RGD. Positions 307 to 344 constitute an LRRNT domain; it reads PAPPRGTLRLPSGCSLSYRTISCINAMLTQIPPLTAPQ. 13 LRR repeats span residues 368–388, 394–415, 416–436, 439–459, 465–484, 486–507, 510–530, 536–557, 558–578, 582–602, 609–630, 632–653, and 661–684; these read NLER…GPKA, KLMR…LPST, LEEL…SLSD, QLVT…NPLA, SLAY…QGLP, SIEE…CFNH, KINV…APLA, NLES…LPKS, LLHL…VFGH, GLEY…DRVS, SLRE…IQEM, ALHF…EICN, and NLEH…TFSC. N378 carries N-linked (GlcNAc...) asparagine glycosylation. N-linked (GlcNAc...) asparagine glycosylation is present at N449. An N-linked (GlcNAc...) asparagine glycan is attached at N506.

The protein belongs to the small leucine-rich proteoglycan (SLRP) family. SLRP class I subfamily. Interacts with numerous extracellular matrix proteins. Interacts with MSL1 and RASSF1. Expressed predominantly in adipose tissue as well as female-specific organs such as mammary gland, ovary, and uterus.

It localises to the secreted. Its subcellular location is the extracellular space. The protein resides in the extracellular matrix. Promotes matrix assembly and cell adhesiveness. The protein is Extracellular matrix protein 2 (ECM2) of Homo sapiens (Human).